The primary structure comprises 261 residues: Bcl-2-binding component 3, isoforms 3/4 (261 aa).

A disordered region spans residues 27-261 (QICGPRERHG…ASAGDFLCTM (235 aa)). Residues 40 to 50 (PGGQLPGARRG) are compositionally biased toward low complexity. Residues 53–63 (PRRPAPLPARP) show a composition bias toward pro residues. The span at 64–73 (PGALGSVLRP) shows a compositional bias: low complexity. Basic residues-rich tracts occupy residues 74 to 87 (LRAR…RPHP) and 95 to 106 (RPHRPTRRHRRP). Over residues 124–146 (PGRSSALALAGGAAPGVARAQRP) the composition is skewed to low complexity. Residues 147–171 (GGSGGRSHPGGPGSPRGGGTVGPGD) are compositionally biased toward gly residues. Residues 172-197 (RGPAAADGGRPQRTVRAAETRGAAAA) show a composition bias toward low complexity.

In terms of assembly, does not interact with BCL2.

Does not affect cell growth. In Homo sapiens (Human), this protein is Bcl-2-binding component 3, isoforms 3/4 (BBC3).